The chain runs to 417 residues: Tyrosine--tRNA ligase (417 aa).

Residue Tyr-39 coordinates L-tyrosine. The 'HIGH' region motif lies at 44–53; sequence PTASSLHVGH. Tyr-176 and Gln-180 together coordinate L-tyrosine. The 'KMSKS' region signature appears at 236–240; the sequence is KMGKS. Position 239 (Lys-239) interacts with ATP. An S4 RNA-binding domain is found at 350–416; the sequence is VGVLSLIVRA…GKKKHVLVRP (67 aa).

This sequence belongs to the class-I aminoacyl-tRNA synthetase family. TyrS type 1 subfamily. Homodimer.

The protein resides in the cytoplasm. The catalysed reaction is tRNA(Tyr) + L-tyrosine + ATP = L-tyrosyl-tRNA(Tyr) + AMP + diphosphate + H(+). Catalyzes the attachment of tyrosine to tRNA(Tyr) in a two-step reaction: tyrosine is first activated by ATP to form Tyr-AMP and then transferred to the acceptor end of tRNA(Tyr). The sequence is that of Tyrosine--tRNA ligase from Agrobacterium fabrum (strain C58 / ATCC 33970) (Agrobacterium tumefaciens (strain C58)).